The following is a 393-amino-acid chain: Reticulon-like protein 2 (393 aa).

Residues 1–21 (MNRNTTTNKNANLNNSRNANA) are compositionally biased toward low complexity. The segment at 1–25 (MNRNTTTNKNANLNNSRNANAPGEA) is disordered. The Cytoplasmic segment spans residues 1 to 60 (MNRNTTTNKNANLNNSRNANAPGEAGHQNKTGLIYWTNPSKSGASFAATLVSLLILRNVN). The Reticulon domain occupies 30 to 236 (KTGLIYWTNP…SISNENKSST (207 aa)). The chain crosses the membrane as a helical span at residues 61–81 (VISVLLKIGYMVLFTSFAVEL). The Lumenal segment spans residues 82–149 (STKVLFDKGV…IGVSLYFLHG (68 aa)). An N-linked (GlcNAc...) asparagine glycan is attached at Asn137. The helical transmembrane segment at 150–170 (LFAIFSMNTVLIMTTIFLYTV) threads the bilayer. Topologically, residues 171 to 393 (PLIYDRKQAR…HGLKQKLQHA (223 aa)) are cytoplasmic. Disordered stretches follow at residues 214–313 (IIPP…DVKT) and 339–393 (GDYN…LQHA). Positions 220 to 285 (DEGSYSTSIS…PVSQNENIGT (66 aa)) are enriched in polar residues. At Ser278 the chain carries Phosphoserine. The segment covering 289-313 (GKQEIPTEKDFNNRHENFSKPDVKT) has biased composition (basic and acidic residues). Residues 365 to 376 (PAESQSIPIKNN) show a composition bias toward polar residues. Over residues 381–393 (KTTHGLKQKLQHA) the composition is skewed to basic residues.

The protein localises to the endoplasmic reticulum membrane. This chain is Reticulon-like protein 2 (RTN2), found in Saccharomyces cerevisiae (strain ATCC 204508 / S288c) (Baker's yeast).